The chain runs to 902 residues: Zinc finger CCCH-type antiviral protein 1 (902 aa).

Ala-2 carries the post-translational modification N-acetylalanine. An N-terminal domain region spans residues 2-254 (ADPEVCCFIT…ARSKSRDRFF (253 aa)). The Nuclear localization signal signature appears at 69–76 (RARVCRRK). 4 C3H1-type zinc fingers span residues 73–86 (CRRKYCQRPCDNLH), 88–110 (CKLNLLGRCNYSQSERNLCKYSH), 150–172 (CKSYKGEGRQQICNQQPPCSRLH), and 169–193 (SRLHICDHFTRGNCRFPNCLRSHNL). The segment at 221–251 (SKHMQKNPPGPRAPSSHRRNMAYRARSKSRD) is disordered. The segment at 224-254 (MQKNPPGPRAPSSHRRNMAYRARSKSRDRFF) is binding to EXOSC5. A compositionally biased stretch (basic residues) spans 235-247 (SSHRRNMAYRARS). Ser-257, Ser-263, Ser-267, and Ser-271 each carry phosphoserine; by GSK3-beta. Over residues 265–278 (SASAERSCTPSPDQ) the composition is skewed to polar residues. Disordered stretches follow at residues 265–287 (SASAERSCTPSPDQISHRASLED) and 299–373 (YLGS…GARR). Position 273 is a phosphothreonine (Thr-273). 2 positions are modified to phosphoserine: Ser-275 and Ser-284. The short motif at 285-292 (LEDAPVDD) is the Nuclear export signal element. Residues Ser-302, Ser-327, Ser-335, Ser-355, Ser-378, and Ser-387 each carry the phosphoserine modification. 2 stretches are compositionally biased toward polar residues: residues 310 to 336 (SGSSKATDLGGTSQAGTSQRFLENGSQ) and 344 to 369 (PGSTYLASNSTSAPNWKSLTSWTNDQ). Thr-393 is modified (phosphothreonine). Residues Ser-407, Ser-469, Ser-492, and Ser-494 each carry the phosphoserine modification. Residues 445–481 (LNYKSTSSGHREISSPRIQDAGPASRDVQATGRIADD) form a disordered region. Thr-554 bears the Phosphothreonine mark. A phosphoserine mark is found at Tyr-572 and Ser-590. Residues 594–681 (SVTKPANSVF…ASKTQKDVIR (88 aa)) enclose the WWE domain. The 187-residue stretch at 716–902 (PQEDFCFLSS…YTEDKACVIS (187 aa)) folds into the PARP catalytic domain.

This sequence belongs to the ARTD/PARP family. Homodimer or homooligomer. Homooligomerization is essential for its antiviral activity. Interacts with EXOSC5. Interacts (via N-terminal domain) with DDX17 in an RNA-independent manner. Interacts with EXOSC3, EXOSC7, DCP2 and DCP1A. Interacts with PARN in an RNA-independent manner. Interacts with XRN1 in an RNA-dependent manner. Isoform 2 interacts (via zinc-fingers) with RIGI in an RNA-dependent manner. Interacts (via N-terminal domain) with DHX30 (via N-terminus) in an RNA-independent manner. In terms of processing, phosphorylation at Ser-275 is essential for sequential phosphorylation of Ser-271, Ser-267, Ser-263 and Ser-257 by GSK3-beta. Phosphorylation by GSK3-beta enhances its antiviral activity.

The protein localises to the cytoplasm. The protein resides in the nucleus. In terms of biological role, antiviral protein which inhibits the replication of viruses by recruiting the cellular RNA degradation machineries to degrade the viral mRNAs. Binds to a ZAP-responsive element (ZRE) present in the target viral mRNA, recruits cellular poly(A)-specific ribonuclease PARN to remove the poly(A) tail, and the 3'-5' exoribonuclease complex exosome to degrade the RNA body from the 3'-end. It also recruits the decapping complex DCP1-DCP2 through RNA helicase p72 (DDX17) to remove the cap structure of the viral mRNA to initiate its degradation from the 5'-end. Its target viruses belong to families which include retroviridae: human immunodeficiency virus type 1 (HIV-1), moloney and murine leukemia virus (MoMLV) and xenotropic MuLV-related virus (XMRV), filoviridae: ebola virus (EBOV) and marburg virus (MARV), togaviridae: sindbis virus (SINV) and Ross river virus (RRV). Specifically targets the multiply spliced but not unspliced or singly spliced HIV-1 mRNAs for degradation. Isoform 1 is a more potent viral inhibitor than isoform 2. Isoform 2 acts as a positive regulator of RIGI signaling resulting in activation of the downstream effector IRF3 leading to the expression of type I IFNs and IFN stimulated genes (ISGs). The polypeptide is Zinc finger CCCH-type antiviral protein 1 (Homo sapiens (Human)).